A 416-amino-acid chain; its full sequence is Enterobactin exporter EntS (416 aa).

The Cytoplasmic portion of the chain corresponds to 1–21 (MNKQSWLLNLSLLKTHPAFRA). A helical membrane pass occupies residues 22–42 (VFLARFISIVSLGLLGVAVPV). The Periplasmic segment spans residues 43–55 (QIQMMTHSTWQVG). Residues 56-76 (LSVTLTGGAMFVGLMVGGVLA) traverse the membrane as a helical segment. Residues 77–83 (DRYERKK) lie on the Cytoplasmic side of the membrane. Residues 84–104 (VILLARGTCGIGFIGLCLNAL) traverse the membrane as a helical segment. At 105–109 (LPEPS) the chain is on the periplasmic side. A helical membrane pass occupies residues 110–130 (LLAIYLLGLWDGFFASLGVTA). At 131–156 (LLAATPALVGRENLMQAGAITMLTVR) the chain is on the cytoplasmic side. A helical membrane pass occupies residues 157 to 177 (LGSVISPMIGGLLLATGGVAW). Residue asparagine 178 is a topological domain, periplasmic. Residues 179-199 (YGLAAAGTFITLLPLLSLPAL) traverse the membrane as a helical segment. Residues 200–218 (PPPPQPREHPLKSLLAGFR) lie on the Cytoplasmic side of the membrane. Residues 219-239 (FLLASPLVGGIALLGGLLTMA) form a helical membrane-spanning segment. At 240–256 (SAVRVLYPALADNWQMS) the chain is on the periplasmic side. A helical membrane pass occupies residues 257-277 (AAQIGFLYAAIPLGAAIGALT). At 278 to 287 (SGKLAHSVRP) the chain is on the cytoplasmic side. Residues 288 to 307 (GLLMLLSTLGAFLAIGLFGL) form a helical membrane-spanning segment. The Periplasmic segment spans residues 308-313 (MPMWIL). A helical transmembrane segment spans residues 314-336 (GVVCLALFGWLSAVSSLLQYTML). Residues 337–356 (QTQTPEAMLGRINGLWTAQN) are Cytoplasmic-facing. A helical membrane pass occupies residues 357–377 (VTGDAIGAALLGGLGAMMTPV). Alanine 378 is a topological domain (periplasmic). The helical transmembrane segment at 379-399 (SASASGFGLLIIGVLLLLVLV) threads the bilayer. Over 400 to 416 (ELRRFRQTPPQVTASGS) the chain is Cytoplasmic.

This sequence belongs to the major facilitator superfamily. EntS (TC 2.A.1.38) family.

It is found in the cell inner membrane. Its function is as follows. Component of an export pathway for enterobactin. The chain is Enterobactin exporter EntS from Escherichia coli O6:K15:H31 (strain 536 / UPEC).